The chain runs to 451 residues: Macrophage scavenger receptor types I and II (451 aa).

At 1 to 50 the chain is on the cytoplasmic side; it reads MEQWDHFHNQQEDTDSCSESVKFDARSMTALLPPNPKNSPSLQEKLKSFK. The residue at position 27 (Ser-27) is a Phosphoserine. The helical; Signal-anchor for type II membrane protein transmembrane segment at 51–76 threads the bilayer; that stretch reads AALIALYLLVFAVLIPLIGIVAAQLL. A spacer region spans residues 77–109; sequence KWETKNCSVSSTNANDITQSLTGKGNDSEEEMR. Topologically, residues 77-451 are extracellular; that stretch reads KWETKNCSVS…SEDAGVTCTL (375 aa). 7 N-linked (GlcNAc...) asparagine glycosylation sites follow: Asn-82, Asn-102, Asn-143, Asn-184, Asn-221, Asn-249, and Asn-267. The stretch at 171–255 forms a coiled coil; the sequence is NAIDEISKSL…VLNNITNDLR (85 aa). The tract at residues 267-346 is disordered; that stretch reads NITLIQGPPG…EKGSGNTLTP (80 aa). One can recognise a Collagen-like domain in the interval 273 to 341; it reads GPPGPPGEKG…KGQKGEKGSG (69 aa). The 101-residue stretch at 350–450 folds into the SRCR domain; it reads VRLVGGSGPH…HSEDAGVTCT (101 aa). Intrachain disulfides connect Cys-375–Cys-439, Cys-388–Cys-449, and Cys-419–Cys-429.

In terms of assembly, homotrimer. Interacts with MYO18A. Isoform I, isoform II and isoform III are expressed in monocyte-derived macrophages. Isoform I and isoform II are expressed in the liver, placenta and brain.

The protein resides in the membrane. In terms of biological role, membrane glycoproteins implicated in the pathologic deposition of cholesterol in arterial walls during atherogenesis. Two types of receptor subunits exist. These receptors mediate the endocytosis of a diverse group of macromolecules, including modified low density lipoproteins (LDL). Isoform III does not internalize acetylated LDL. The protein is Macrophage scavenger receptor types I and II (MSR1) of Homo sapiens (Human).